Consider the following 260-residue polypeptide: Imidazole glycerol phosphate synthase subunit HisF (260 aa).

Active-site residues include Asp12 and Asp131.

Belongs to the HisA/HisF family. In terms of assembly, heterodimer of HisH and HisF.

It is found in the cytoplasm. It carries out the reaction 5-[(5-phospho-1-deoxy-D-ribulos-1-ylimino)methylamino]-1-(5-phospho-beta-D-ribosyl)imidazole-4-carboxamide + L-glutamine = D-erythro-1-(imidazol-4-yl)glycerol 3-phosphate + 5-amino-1-(5-phospho-beta-D-ribosyl)imidazole-4-carboxamide + L-glutamate + H(+). Its pathway is amino-acid biosynthesis; L-histidine biosynthesis; L-histidine from 5-phospho-alpha-D-ribose 1-diphosphate: step 5/9. Its function is as follows. IGPS catalyzes the conversion of PRFAR and glutamine to IGP, AICAR and glutamate. The HisF subunit catalyzes the cyclization activity that produces IGP and AICAR from PRFAR using the ammonia provided by the HisH subunit. This Corynebacterium jeikeium (strain K411) protein is Imidazole glycerol phosphate synthase subunit HisF.